The chain runs to 324 residues: tRNA dimethylallyltransferase (324 aa).

Residue 17–24 (GPTASGKT) participates in ATP binding. Residue 19 to 24 (TASGKT) coordinates substrate. 4 interaction with substrate tRNA regions span residues 42 to 45 (DSAL), 166 to 170 (QRIQR), 251 to 256 (RCVGYR), and 284 to 291 (KRQITWLR).

This sequence belongs to the IPP transferase family. As to quaternary structure, monomer. Requires Mg(2+) as cofactor.

The catalysed reaction is adenosine(37) in tRNA + dimethylallyl diphosphate = N(6)-dimethylallyladenosine(37) in tRNA + diphosphate. Functionally, catalyzes the transfer of a dimethylallyl group onto the adenine at position 37 in tRNAs that read codons beginning with uridine, leading to the formation of N6-(dimethylallyl)adenosine (i(6)A). In Burkholderia vietnamiensis (strain G4 / LMG 22486) (Burkholderia cepacia (strain R1808)), this protein is tRNA dimethylallyltransferase.